A 142-amino-acid polypeptide reads, in one-letter code: Transcription antitermination protein NusB (142 aa).

This sequence belongs to the NusB family.

Functionally, involved in transcription antitermination. Required for transcription of ribosomal RNA (rRNA) genes. Binds specifically to the boxA antiterminator sequence of the ribosomal RNA (rrn) operons. The sequence is that of Transcription antitermination protein NusB from Latilactobacillus sakei subsp. sakei (strain 23K) (Lactobacillus sakei subsp. sakei).